The sequence spans 622 residues: Condensin-2 complex subunit H2 (622 aa).

Position 19 is a phosphothreonine (T19). Phosphoserine occurs at positions 95, 199, 223, and 227. The disordered stretch occupies residues 207 to 354 (WNPKEPGRAE…PGQKRKRKGA (148 aa)). Residues 262-273 (AAEPPEASAPEV) are compositionally biased toward low complexity. S282 carries the post-translational modification Phosphoserine. Basic and acidic residues predominate over residues 294–312 (TLRERKEAPEPASRLKDTP).

It belongs to the CND2 H2 (condensin-2 subunit 2) family. In terms of assembly, component of the condensin-2 complex, which contains the SMC2 and SMC4 heterodimer, and three non SMC subunits, NCAPG2, NCAPH2 and NCAPD3 that probably regulate the complex.

The protein resides in the nucleus. Regulatory subunit of the condensin-2 complex, a complex that seems to provide chromosomes with an additional level of organization and rigidity and in establishing mitotic chromosome architecture. May promote the resolution of double-strand DNA catenanes (intertwines) between sister chromatids. Condensin-mediated compaction likely increases tension in catenated sister chromatids, providing directionality for type II topoisomerase-mediated strand exchanges toward chromatid decatenation. Required for decatenation of chromatin bridges at anaphase. Early in neurogenesis, may play an essential role to ensure accurate mitotic chromosome condensation in neuron stem cells, ultimately affecting neuron pool and cortex size. Seems to have lineage-specific role in T-cell development. In Bos taurus (Bovine), this protein is Condensin-2 complex subunit H2 (NCAPH2).